The chain runs to 211 residues: Thymidylate kinase (211 aa).

Residue 7–14 (GIDASGKS) coordinates ATP.

The protein belongs to the thymidylate kinase family.

The catalysed reaction is dTMP + ATP = dTDP + ADP. In terms of biological role, phosphorylation of dTMP to form dTDP in both de novo and salvage pathways of dTTP synthesis. This chain is Thymidylate kinase, found in Mesomycoplasma hyopneumoniae (strain 7448) (Mycoplasma hyopneumoniae).